A 162-amino-acid chain; its full sequence is Interleukin-15 (162 aa).

An N-terminal signal peptide occupies residues 1–29 (MRISKPHLRITSIQCYVCLLLNTHFLTEA). Residues 30-48 (GIRVFILGCISAGIPKTEA) constitute a propeptide that is removed on maturation. Intrachain disulfides connect Cys83–Cys133 and Cys90–Cys136. N-linked (GlcNAc...) asparagine glycosylation is found at Asn119, Asn127, and Asn143.

Belongs to the IL-15/IL-21 family.

The protein resides in the secreted. Functionally, cytokine that plays a major role in the development of inflammatory and protective immune responses to microbial invaders and parasites by modulating immune cells of both the innate and adaptive immune systems. Stimulates the proliferation of natural killer cells, T-cells and B-cells and promotes the secretion of several cytokines. In monocytes, induces the production of IL8 and monocyte chemotactic protein 1/CCL2, two chemokines that attract neutrophils and monocytes respectively to sites of infection. Unlike most cytokines, which are secreted in soluble form, IL15 is expressed in association with its high affinity IL15RA on the surface of IL15-producing cells and delivers signals to target cells that express IL2RB and IL2RG receptor subunits. Binding to its receptor triggers the phosphorylation of JAK1 and JAK3 and the recruitment and subsequent phosphorylation of signal transducer and activator of transcription-3/STAT3 and STAT5. In mast cells, induces the rapid tyrosine phosphorylation of STAT6 and thereby controls mast cell survival and release of cytokines such as IL4. This is Interleukin-15 (IL15) from Marmota himalayana (Himalayan marmot).